A 558-amino-acid chain; its full sequence is Formate--tetrahydrofolate ligase (558 aa).

66–73 (TPAGEGKT) is an ATP binding site.

This sequence belongs to the formate--tetrahydrofolate ligase family.

The catalysed reaction is (6S)-5,6,7,8-tetrahydrofolate + formate + ATP = (6R)-10-formyltetrahydrofolate + ADP + phosphate. The protein operates within one-carbon metabolism; tetrahydrofolate interconversion. The polypeptide is Formate--tetrahydrofolate ligase (Neisseria meningitidis serogroup A / serotype 4A (strain DSM 15465 / Z2491)).